The sequence spans 623 residues: Glutathione import ATP-binding protein GsiA (623 aa).

ABC transporter domains are found at residues 15 to 269 and 314 to 564; these read VENL…RALL and LRVR…RKLL. ATP-binding positions include 49-56 and 357-364; these read GESGSGKS.

This sequence belongs to the ABC transporter superfamily. Glutathione importer (TC 3.A.1.5.11) family. The complex is composed of two ATP-binding proteins (GsiA), two transmembrane proteins (GsiC and GsiD) and a solute-binding protein (GsiB).

It localises to the cell inner membrane. The enzyme catalyses glutathione(out) + ATP + H2O = glutathione(in) + ADP + phosphate + H(+). Its function is as follows. Part of the ABC transporter complex GsiABCD involved in glutathione import. Responsible for energy coupling to the transport system. In Shigella flexneri, this protein is Glutathione import ATP-binding protein GsiA.